The sequence spans 167 residues: Large ribosomal subunit protein uL10 (167 aa).

It belongs to the universal ribosomal protein uL10 family. Part of the ribosomal stalk of the 50S ribosomal subunit. The N-terminus interacts with L11 and the large rRNA to form the base of the stalk. The C-terminus forms an elongated spine to which L12 dimers bind in a sequential fashion forming a multimeric L10(L12)X complex.

Forms part of the ribosomal stalk, playing a central role in the interaction of the ribosome with GTP-bound translation factors. In Flavobacterium johnsoniae (strain ATCC 17061 / DSM 2064 / JCM 8514 / BCRC 14874 / CCUG 350202 / NBRC 14942 / NCIMB 11054 / UW101) (Cytophaga johnsonae), this protein is Large ribosomal subunit protein uL10.